The primary structure comprises 89 residues: Putative defensin-like protein 254 (89 aa).

Residues 1–20 form the signal peptide; it reads MHNISFKLLLLCDLFLSSSS. Intrachain disulfides connect cysteine 31–cysteine 48 and cysteine 37–cysteine 55.

This sequence belongs to the DEFL family.

Its subcellular location is the secreted. The chain is Putative defensin-like protein 254 from Arabidopsis thaliana (Mouse-ear cress).